We begin with the raw amino-acid sequence, 372 residues long: 2-aminoethylphosphonate--pyruvate transaminase 2 (372 aa).

N6-(pyridoxal phosphate)lysine is present on lysine 192.

This sequence belongs to the class-V pyridoxal-phosphate-dependent aminotransferase family. PhnW subfamily. Homodimer. Pyridoxal 5'-phosphate serves as cofactor.

It catalyses the reaction (2-aminoethyl)phosphonate + pyruvate = phosphonoacetaldehyde + L-alanine. Involved in phosphonate degradation. The chain is 2-aminoethylphosphonate--pyruvate transaminase 2 from Polaromonas sp. (strain JS666 / ATCC BAA-500).